A 129-amino-acid polypeptide reads, in one-letter code: Small ribosomal subunit protein uS11 (129 aa).

The protein belongs to the universal ribosomal protein uS11 family. In terms of assembly, part of the 30S ribosomal subunit. Interacts with proteins S7 and S18. Binds to IF-3.

Located on the platform of the 30S subunit, it bridges several disparate RNA helices of the 16S rRNA. Forms part of the Shine-Dalgarno cleft in the 70S ribosome. This Methylobacterium radiotolerans (strain ATCC 27329 / DSM 1819 / JCM 2831 / NBRC 15690 / NCIMB 10815 / 0-1) protein is Small ribosomal subunit protein uS11.